Consider the following 66-residue polypeptide: Large ribosomal subunit protein uL29 (66 aa).

Belongs to the universal ribosomal protein uL29 family.

The protein is Large ribosomal subunit protein uL29 of Geobacillus thermodenitrificans (strain NG80-2).